Consider the following 269-residue polypeptide: MDNYAVWGNPIKQSKSPQIHKIFAEQTKQCMEYKAILGDPEKFETELLRFFADGAKGCNITAPFKERAYSLADEYSERALTAEACNTLKRLQDGRLYADNTDGAGLVSDLERLGWLKSKQSLLIIGAGGATKGVLLPLLQAQQNITLCNRTLTKARDLADKFAPYGNIQAMKLSEIPVQKFDLVINATSLGLQGKTVDIEPEILRLAGAVYDMQYDKGKDTPFVAWAKALGVQNVHDGFGMLVGQAAHSFYLWRGIMPDIKPLLENDLI.

Residues 14-16 and T61 each bind shikimate; that span reads SKS. K65 (proton acceptor) is an active-site residue. E77 contacts NADP(+). 2 residues coordinate shikimate: N86 and D102. NADP(+) contacts are provided by residues 126 to 130, 149 to 154, and M213; these read GAGGA and NRTLTK. Y215 contacts shikimate. G238 is a binding site for NADP(+).

This sequence belongs to the shikimate dehydrogenase family. Homodimer.

It catalyses the reaction shikimate + NADP(+) = 3-dehydroshikimate + NADPH + H(+). The protein operates within metabolic intermediate biosynthesis; chorismate biosynthesis; chorismate from D-erythrose 4-phosphate and phosphoenolpyruvate: step 4/7. Its function is as follows. Involved in the biosynthesis of the chorismate, which leads to the biosynthesis of aromatic amino acids. Catalyzes the reversible NADPH linked reduction of 3-dehydroshikimate (DHSA) to yield shikimate (SA). The protein is Shikimate dehydrogenase (NADP(+)) of Actinobacillus succinogenes (strain ATCC 55618 / DSM 22257 / CCUG 43843 / 130Z).